Here is a 605-residue protein sequence, read N- to C-terminus: Elongation factor 4 (605 aa).

The 183-residue stretch at 4 to 186 (SATRNFCIIA…AIVARVPAPK (183 aa)) folds into the tr-type G domain. Residues 16–21 (DHGKST) and 133–136 (NKID) each bind GTP.

This sequence belongs to the TRAFAC class translation factor GTPase superfamily. Classic translation factor GTPase family. LepA subfamily.

The protein localises to the cell membrane. The catalysed reaction is GTP + H2O = GDP + phosphate + H(+). In terms of biological role, required for accurate and efficient protein synthesis under certain stress conditions. May act as a fidelity factor of the translation reaction, by catalyzing a one-codon backward translocation of tRNAs on improperly translocated ribosomes. Back-translocation proceeds from a post-translocation (POST) complex to a pre-translocation (PRE) complex, thus giving elongation factor G a second chance to translocate the tRNAs correctly. Binds to ribosomes in a GTP-dependent manner. This Dehalococcoides mccartyi (strain ATCC BAA-2266 / KCTC 15142 / 195) (Dehalococcoides ethenogenes (strain 195)) protein is Elongation factor 4.